The following is a 227-amino-acid chain: Heptaprenylglyceryl phosphate synthase (227 aa).

K13 contributes to the sn-glycerol 1-phosphate binding site. Residues D15 and T41 each contribute to the Mg(2+) site. Residues 159-164, G189, and 209-210 each bind sn-glycerol 1-phosphate; these read YLEYSG and GN.

Belongs to the GGGP/HepGP synthase family. Group I subfamily. Homodimer. It depends on Mg(2+) as a cofactor.

The catalysed reaction is sn-glycerol 1-phosphate + all-trans-heptaprenyl diphosphate = 3-heptaprenyl-sn-glycero-1-phosphate + diphosphate. The protein operates within membrane lipid metabolism; glycerophospholipid metabolism. Prenyltransferase that catalyzes in vivo the transfer of the heptaprenyl moiety of heptaprenyl pyrophosphate (HepPP; 35 carbon atoms) to the C3 hydroxyl of sn-glycerol-1-phosphate (G1P), producing heptaprenylglyceryl phosphate (HepGP). This reaction is an ether-bond-formation step in the biosynthesis of archaea-type G1P-based membrane lipids found in Bacillales. This Exiguobacterium sibiricum (strain DSM 17290 / CCUG 55495 / CIP 109462 / JCM 13490 / 255-15) protein is Heptaprenylglyceryl phosphate synthase.